The following is a 2193-amino-acid chain: Genome polyprotein (2193 aa).

The disordered stretch occupies residues 1 to 23 (MGSQVSTQRSGSHENSNSASEGS). The N-myristoyl glycine; by host moiety is linked to residue glycine 2. The Cytoplasmic segment spans residues 2-1503 (GSQVSTQRSG…HLNRAVLVMQ (1502 aa)). Residues 566–588 (GDPIADMIDQTVNNQVNRSLTAL) form an amphipathic alpha-helix region. Residues histidine 883 and aspartate 901 each act as for protease 2A activity in the active site. The Zn(2+) site is built by cysteine 918 and cysteine 920. The For protease 2A activity role is filled by cysteine 972. Zn(2+) contacts are provided by cysteine 978 and histidine 980. Residues 1112–1184 (SASWLKKFND…EQSAASQEDL (73 aa)) form a membrane-binding region. An oligomerization region spans residues 1112–1250 (SASWLKKFND…SPGTGKSLAT (139 aa)). Residues 1133–1137 (SSKIS) are RNA-binding. The region spanning 1216–1374 (EKRMNNYMQF…YKTDLGRLDA (159 aa)) is the SF3 helicase domain. 1240-1247 (GSPGTGKS) contributes to the ATP binding site. Zn(2+) is bound by residues cysteine 1381, cysteine 1392, and cysteine 1397. The segment at 1381–1397 (CTENNTANFKRCSPLVC) adopts a C4-type; degenerate zinc-finger fold. Residues 1424–1431 (EYNNRSAI) are RNA-binding. Residues 1435–1440 (IEALFQ) form an oligomerization region. Residues 1504–1519 (SIATVVAVVSLVYVIY) lie within the membrane without spanning it. Topologically, residues 1520 to 2193 (KLFAGFQGAY…NLRRNWLELF (674 aa)) are cytoplasmic. Tyrosine 1529 is subject to O-(5'-phospho-RNA)-tyrosine. The region spanning 1549–1727 (GPSLDFALSL…FCAGLKRGYF (179 aa)) is the Peptidase C3 domain. Residues histidine 1588, glutamate 1619, and cysteine 1695 each act as for protease 3C activity in the active site. The 117-residue stretch at 1958-2074 (GSLFAFDYSG…SYPFPIDCSE (117 aa)) folds into the RdRp catalytic domain. Mg(2+) contacts are provided by aspartate 1964 and aspartate 2060.

The protein belongs to the picornaviruses polyprotein family. As to quaternary structure, interacts with capsid protein VP1 and capsid protein VP3 to form heterotrimeric protomers. Interacts with capsid protein VP0, and capsid protein VP3 to form heterotrimeric protomers. Five protomers subsequently associate to form pentamers which serve as building blocks for the capsid. Interacts with capsid protein VP2, capsid protein VP3 and capsid protein VP4 following cleavage of capsid protein VP0. In terms of assembly, interacts with capsid protein VP1 and capsid protein VP3 in the mature capsid. As to quaternary structure, interacts with capsid protein VP0 and capsid protein VP1 to form heterotrimeric protomers. Five protomers subsequently associate to form pentamers which serve as building blocks for the capsid. Interacts with capsid protein VP4 in the mature capsid. Interacts with protein 2C; this interaction may be important for virion morphogenesis. Interacts with capsid protein VP1 and capsid protein VP3. In terms of assembly, homodimer. As to quaternary structure, homohexamer; forms a hexameric ring structure with 6-fold symmetry characteristic of AAA+ ATPases. Interacts (via N-terminus) with host RTN3 (via reticulon domain); this interaction is important for viral replication. Interacts with capsid protein VP3; this interaction may be important for virion morphogenesis. Interacts with protein 3CD. In terms of assembly, homodimer. Interacts with host GBF1. Interacts (via GOLD domain) with host ACBD3 (via GOLD domain); this interaction allows the formation of a viral protein 3A/ACBD3 heterotetramer with a 2:2 stoichiometry, which will stimulate the recruitment of host PI4KB in order to synthesize PI4P at the viral RNA replication sites. As to quaternary structure, interacts with RNA-directed RNA polymerase. Interacts with host IFIH1/MDA5; this interaction inhibits host IFIH1. In terms of assembly, protein 3CD: Interacts with protein 3AB and with RNA-directed RNA polymerase. As to quaternary structure, interacts with Viral protein genome-linked and with protein 3CD. Mg(2+) is required as a cofactor. Specific enzymatic cleavages in vivo by the viral proteases yield processing intermediates and the mature proteins. Post-translationally, myristoylation is required for the formation of pentamers during virus assembly. Further assembly of 12 pentamers and a molecule of genomic RNA generates the provirion. In terms of processing, during virion maturation, immature virions are rendered infectious following cleavage of VP0 into VP4 and VP2. This maturation seems to be an autocatalytic event triggered by the presence of RNA in the capsid and it is followed by a conformational change infectious virion. Myristoylation is required during RNA encapsidation and formation of the mature virus particle. Post-translationally, VPg is uridylylated by the polymerase into VPg-pUpU. This acts as a nucleotide-peptide primer for the genomic RNA replication.

The protein resides in the virion. It localises to the host cytoplasm. Its subcellular location is the host cytoplasmic vesicle membrane. It is found in the host nucleus. The enzyme catalyses a ribonucleoside 5'-triphosphate + H2O = a ribonucleoside 5'-diphosphate + phosphate + H(+). It carries out the reaction Selective cleavage of Tyr-|-Gly bond in the picornavirus polyprotein.. The catalysed reaction is RNA(n) + a ribonucleoside 5'-triphosphate = RNA(n+1) + diphosphate. It catalyses the reaction Selective cleavage of Gln-|-Gly bond in the poliovirus polyprotein. In other picornavirus reactions Glu may be substituted for Gln, and Ser or Thr for Gly.. Replication or transcription is subject to high level of random mutations by the nucleotide analog ribavirin. Functionally, forms an icosahedral capsid of pseudo T=3 symmetry with capsid proteins VP2 and VP3. The capsid is 300 Angstroms in diameter, composed of 60 copies of each capsid protein and enclosing the viral positive strand RNA genome. Capsid protein VP1 mainly forms the vertices of the capsid. Capsid protein VP1 interacts with host cell receptor to provide virion attachment to target host cells. This attachment induces virion internalization. After binding to its receptor, the capsid undergoes conformational changes. Capsid protein VP1 N-terminus (that contains an amphipathic alpha-helix) and capsid protein VP4 are externalized. Together, they shape a pore in the host membrane through which viral genome is translocated to host cell cytoplasm. In terms of biological role, forms an icosahedral capsid of pseudo T=3 symmetry with capsid proteins VP2 and VP3. The capsid is 300 Angstroms in diameter, composed of 60 copies of each capsid protein and enclosing the viral positive strand RNA genome. Its function is as follows. Lies on the inner surface of the capsid shell. After binding to the host receptor, the capsid undergoes conformational changes. Capsid protein VP4 is released, Capsid protein VP1 N-terminus is externalized, and together, they shape a pore in the host membrane through which the viral genome is translocated into the host cell cytoplasm. Component of immature procapsids, which is cleaved into capsid proteins VP4 and VP2 after maturation. Allows the capsid to remain inactive before the maturation step. Functionally, cysteine protease that cleaves viral polyprotein and specific host proteins. It is responsible for the autocatalytic cleavage between the P1 and P2 regions, which is the first cleavage occurring in the polyprotein. Also cleaves the host translation initiation factor EIF4G1, in order to shut down the capped cellular mRNA translation. Inhibits the host nucleus-cytoplasm protein and RNA trafficking by cleaving host members of the nuclear pores. Counteracts stress granule formation probably by antagonizing its assembly or promoting its dissassembly. Cleaves and inhibits host IFIH1/MDA5, thereby inhibiting the type-I IFN production and the establishment of the antiviral state. Cleaves and inhibits host MAVS, thereby inhibiting the type-I IFN production and the establishment of the antiviral state. In terms of biological role, plays an essential role in the virus replication cycle by acting as a viroporin. Creates a pore in the host endoplasmic reticulum and as a consequence releases Ca2+ in the cytoplasm of infected cell. In turn, high levels of cytoplasmic calcium may trigger membrane trafficking and transport of viral ER-associated proteins to viroplasms, sites of viral genome replication. Its function is as follows. Induces and associates with structural rearrangements of intracellular membranes. Displays RNA-binding, nucleotide binding and NTPase activities. May play a role in virion morphogenesis and viral RNA encapsidation by interacting with the capsid protein VP3. Localizes the viral replication complex to the surface of membranous vesicles. Together with protein 3CD binds the Cis-Active RNA Element (CRE) which is involved in RNA synthesis initiation. Acts as a cofactor to stimulate the activity of 3D polymerase, maybe through a nucleid acid chaperone activity. Functionally, localizes the viral replication complex to the surface of membranous vesicles. It inhibits host cell endoplasmic reticulum-to-Golgi apparatus transport and causes the disassembly of the Golgi complex, possibly through GBF1 interaction. This would result in depletion of MHC, trail receptors and IFN receptors at the host cell surface. Plays an essential role in viral RNA replication by recruiting ACBD3 and PI4KB at the viral replication sites, thereby allowing the formation of the rearranged membranous structures where viral replication takes place. In terms of biological role, acts as a primer for viral RNA replication and remains covalently bound to viral genomic RNA. VPg is uridylylated prior to priming replication into VPg-pUpU. The oriI viral genomic sequence may act as a template for this. The VPg-pUpU is then used as primer on the genomic RNA poly(A) by the RNA-dependent RNA polymerase to replicate the viral genome. During genome replication, the VPg-RNA linkage is removed by the host TDP2, thereby accelerating replication. During the late stage of the replication cycle, host TDP2 is excluded from sites of viral RNA synthesis and encapsidation, allowing for the generation of progeny virions. Its function is as follows. Involved in the viral replication complex and viral polypeptide maturation. It exhibits protease activity with a specificity and catalytic efficiency that is different from protease 3C. Protein 3CD lacks polymerase activity. Protein 3CD binds to the 5'UTR of the viral genome. Major viral protease that mediates proteolytic processing of the polyprotein. Cleaves host EIF5B, contributing to host translation shutoff. Also cleaves host PABPC1, contributing to host translation shutoff. Binds and inhibits host IFIH1/MDA5, thereby inhibiting the type-I IFN production and the establishment of the antiviral state. Cleaves host MAP3K7/TAK1, resulting in inhibition of TRAF6-triggered NF-kappa-B induction. Cleaves host NLRP1, triggers host N-glycine-mediated degradation of the autoinhibitory NLRP1 N-terminal fragment. Functionally, replicates the viral genomic RNA on the surface of intracellular membranes. May form linear arrays of subunits that propagate along a strong head-to-tail interaction called interface-I. Covalently attaches UMP to a tyrosine of VPg, which is used to prime RNA synthesis. The positive stranded RNA genome is first replicated at virus induced membranous vesicles, creating a dsRNA genomic replication form. This dsRNA is then used as template to synthesize positive stranded RNA genomes. ss(+)RNA genomes are either translated, replicated or encapsidated. In Homo sapiens (Human), this protein is Genome polyprotein.